A 162-amino-acid chain; its full sequence is Regulator of sigma D (162 aa).

It belongs to the Rsd/AlgQ family. As to quaternary structure, interacts with RpoD.

The protein localises to the cytoplasm. In terms of biological role, binds RpoD and negatively regulates RpoD-mediated transcription activation by preventing the interaction between the primary sigma factor RpoD with the catalytic core of the RNA polymerase and with promoter DNA. May be involved in replacement of the RNA polymerase sigma subunit from RpoD to RpoS during the transition from exponential growth to the stationary phase. The sequence is that of Regulator of sigma D from Salmonella arizonae (strain ATCC BAA-731 / CDC346-86 / RSK2980).